The primary structure comprises 145 residues: Cell division protein SepF (145 aa).

Residues 21-41 are disordered; it reads DKPQESTKAKEENVKPKHETP. The segment covering 23-41 has biased composition (basic and acidic residues); the sequence is PQESTKAKEENVKPKHETP.

It belongs to the SepF family. In terms of assembly, homodimer. Interacts with FtsZ.

The protein localises to the cytoplasm. Cell division protein that is part of the divisome complex and is recruited early to the Z-ring. Probably stimulates Z-ring formation, perhaps through the cross-linking of FtsZ protofilaments. Its function overlaps with FtsA. This is Cell division protein SepF from Caldicellulosiruptor saccharolyticus (strain ATCC 43494 / DSM 8903 / Tp8T 6331).